The following is a 350-amino-acid chain: UDP-N-acetylenolpyruvoylglucosamine reductase (350 aa).

An FAD-binding PCMH-type domain is found at 24 to 195 (HVEATARWLL…VAVEFNLPLL (172 aa)). Residue R172 is part of the active site. S245 acts as the Proton donor in catalysis. Residue E342 is part of the active site.

This sequence belongs to the MurB family. FAD serves as cofactor.

It localises to the cytoplasm. It carries out the reaction UDP-N-acetyl-alpha-D-muramate + NADP(+) = UDP-N-acetyl-3-O-(1-carboxyvinyl)-alpha-D-glucosamine + NADPH + H(+). The protein operates within cell wall biogenesis; peptidoglycan biosynthesis. In terms of biological role, cell wall formation. The sequence is that of UDP-N-acetylenolpyruvoylglucosamine reductase from Xanthomonas oryzae pv. oryzae (strain MAFF 311018).